Consider the following 568-residue polypeptide: Circadian clock protein KaiC2 (568 aa).

2 consecutive KaiC domains span residues I11–Q250 and E251–T485. 2 positions are modified to phosphoserine; by autocatalysis: S423 and S424.

It belongs to the KaiC family. In terms of assembly, multimerizes, probably forming homohexamers, no interaction with KaiC1 or KaiC3 is seen.

It carries out the reaction L-seryl-[protein] + ATP = O-phospho-L-seryl-[protein] + ADP + H(+). The enzyme catalyses L-threonyl-[protein] + ATP = O-phospho-L-threonyl-[protein] + ADP + H(+). The catalysed reaction is ATP + H2O = ADP + phosphate + H(+). In terms of biological role, autophosphorylates independently of KaiA. The protein is Circadian clock protein KaiC2 of Synechocystis sp. (strain ATCC 27184 / PCC 6803 / Kazusa).